Reading from the N-terminus, the 228-residue chain is Translation initiation factor 6 (228 aa).

Belongs to the eIF-6 family.

In terms of biological role, binds to the 50S ribosomal subunit and prevents its association with the 30S ribosomal subunit to form the 70S initiation complex. This chain is Translation initiation factor 6, found in Thermococcus gammatolerans (strain DSM 15229 / JCM 11827 / EJ3).